A 145-amino-acid chain; its full sequence is MRALIQRVSEASVTVEGECLGEIGPGLLILVCAMQGDGEAQASALAARIAKLRIFKDEAGKMNRSVRDTGGAALVVSQFTLAADTSRGNRPGFSAAAPPADGERLYRQFAAEIAACGIPTATGRFGADMKVRLLNDGPVTIWMES.

The Gly-cisPro motif, important for rejection of L-amino acids motif lies at 137–138 (GP).

This sequence belongs to the DTD family. In terms of assembly, homodimer.

Its subcellular location is the cytoplasm. The enzyme catalyses glycyl-tRNA(Ala) + H2O = tRNA(Ala) + glycine + H(+). It catalyses the reaction a D-aminoacyl-tRNA + H2O = a tRNA + a D-alpha-amino acid + H(+). Its function is as follows. An aminoacyl-tRNA editing enzyme that deacylates mischarged D-aminoacyl-tRNAs. Also deacylates mischarged glycyl-tRNA(Ala), protecting cells against glycine mischarging by AlaRS. Acts via tRNA-based rather than protein-based catalysis; rejects L-amino acids rather than detecting D-amino acids in the active site. By recycling D-aminoacyl-tRNA to D-amino acids and free tRNA molecules, this enzyme counteracts the toxicity associated with the formation of D-aminoacyl-tRNA entities in vivo and helps enforce protein L-homochirality. The polypeptide is D-aminoacyl-tRNA deacylase (Cereibacter sphaeroides (strain KD131 / KCTC 12085) (Rhodobacter sphaeroides)).